Here is a 266-residue protein sequence, read N- to C-terminus: Undecaprenyl-diphosphatase (266 aa).

Helical transmembrane passes span 1 to 21, 39 to 59, 87 to 107, 111 to 131, 144 to 164, 183 to 203, 218 to 238, and 244 to 264; these read METF…FLPI, QGLS…VIYF, WWII…KDFI, FRNT…LWAA, MGWK…IPGT, AAAR…ALLV, ALGL…HFFL, and IGMT…LGLL.

This sequence belongs to the UppP family.

The protein resides in the cell inner membrane. It catalyses the reaction di-trans,octa-cis-undecaprenyl diphosphate + H2O = di-trans,octa-cis-undecaprenyl phosphate + phosphate + H(+). Functionally, catalyzes the dephosphorylation of undecaprenyl diphosphate (UPP). Confers resistance to bacitracin. The sequence is that of Undecaprenyl-diphosphatase from Shewanella frigidimarina (strain NCIMB 400).